The following is a 155-amino-acid chain: 1,4-dihydroxy-2-naphthoyl-CoA hydrolase (155 aa).

The active site involves Asp-22.

This sequence belongs to the 4-hydroxybenzoyl-CoA thioesterase family. DHNA-CoA hydrolase subfamily.

It carries out the reaction 1,4-dihydroxy-2-naphthoyl-CoA + H2O = 1,4-dihydroxy-2-naphthoate + CoA + H(+). Its pathway is cofactor biosynthesis; phylloquinone biosynthesis. It participates in quinol/quinone metabolism; 1,4-dihydroxy-2-naphthoate biosynthesis; 1,4-dihydroxy-2-naphthoate from chorismate: step 7/7. Catalyzes the hydrolysis of 1,4-dihydroxy-2-naphthoyl-CoA (DHNA-CoA) to 1,4-dihydroxy-2-naphthoate (DHNA), a reaction involved in phylloquinone (vitamin K1) biosynthesis. In Prochlorococcus marinus (strain SARG / CCMP1375 / SS120), this protein is 1,4-dihydroxy-2-naphthoyl-CoA hydrolase.